Consider the following 294-residue polypeptide: Cytidine deaminase (294 aa).

CMP/dCMP-type deaminase domains are found at residues 48-168 and 186-294; these read DEDA…FGPK and VSGD…VLLG. 89–91 provides a ligand contact to substrate; that stretch reads NME. Residue H102 coordinates Zn(2+). E104 acts as the Proton donor in catalysis. C129 and C132 together coordinate Zn(2+).

Belongs to the cytidine and deoxycytidylate deaminase family. As to quaternary structure, homodimer. It depends on Zn(2+) as a cofactor.

The catalysed reaction is cytidine + H2O + H(+) = uridine + NH4(+). The enzyme catalyses 2'-deoxycytidine + H2O + H(+) = 2'-deoxyuridine + NH4(+). This enzyme scavenges exogenous and endogenous cytidine and 2'-deoxycytidine for UMP synthesis. The polypeptide is Cytidine deaminase (Klebsiella pneumoniae (strain 342)).